The primary structure comprises 142 residues: Hemoglobin subunit alpha (142 aa).

The 141-residue stretch at 2-142 folds into the Globin domain; the sequence is KLSAEDKHNV…VGHVLTSKYR (141 aa). Residue His59 coordinates O2. Position 88 (His88) interacts with heme b.

This sequence belongs to the globin family. In terms of assembly, heterotetramer of two alpha chains and two beta chains. Red blood cells.

Its function is as follows. Involved in oxygen transport from the lung to the various peripheral tissues. This is Hemoglobin subunit alpha (HBA) from Taricha granulosa (Roughskin newt).